A 152-amino-acid chain; its full sequence is Deoxyuridine 5'-triphosphate nucleotidohydrolase (152 aa).

Residues 71–73 (RSG), Asn-84, 88–90 (LID), and Met-98 contribute to the substrate site.

The protein belongs to the dUTPase family. Requires Mg(2+) as cofactor.

The catalysed reaction is dUTP + H2O = dUMP + diphosphate + H(+). The protein operates within pyrimidine metabolism; dUMP biosynthesis; dUMP from dCTP (dUTP route): step 2/2. In terms of biological role, this enzyme is involved in nucleotide metabolism: it produces dUMP, the immediate precursor of thymidine nucleotides and it decreases the intracellular concentration of dUTP so that uracil cannot be incorporated into DNA. This Salmonella arizonae (strain ATCC BAA-731 / CDC346-86 / RSK2980) protein is Deoxyuridine 5'-triphosphate nucleotidohydrolase.